The following is a 235-amino-acid chain: 5'-methylthioadenosine/S-adenosylhomocysteine nucleosidase (235 aa).

The active-site Proton acceptor is the glutamate 12. Substrate contacts are provided by residues glycine 78, methionine 153, and 174-175; that span reads ME. Aspartate 198 serves as the catalytic Proton donor.

It belongs to the PNP/UDP phosphorylase family. MtnN subfamily.

The catalysed reaction is S-adenosyl-L-homocysteine + H2O = S-(5-deoxy-D-ribos-5-yl)-L-homocysteine + adenine. The enzyme catalyses S-methyl-5'-thioadenosine + H2O = 5-(methylsulfanyl)-D-ribose + adenine. It catalyses the reaction 5'-deoxyadenosine + H2O = 5-deoxy-D-ribose + adenine. It participates in amino-acid biosynthesis; L-methionine biosynthesis via salvage pathway; S-methyl-5-thio-alpha-D-ribose 1-phosphate from S-methyl-5'-thioadenosine (hydrolase route): step 1/2. Catalyzes the irreversible cleavage of the glycosidic bond in both 5'-methylthioadenosine (MTA) and S-adenosylhomocysteine (SAH/AdoHcy) to adenine and the corresponding thioribose, 5'-methylthioribose and S-ribosylhomocysteine, respectively. Also cleaves 5'-deoxyadenosine, a toxic by-product of radical S-adenosylmethionine (SAM) enzymes, into 5-deoxyribose and adenine. The protein is 5'-methylthioadenosine/S-adenosylhomocysteine nucleosidase of Geobacillus kaustophilus (strain HTA426).